The chain runs to 348 residues: UDP-3-O-acylglucosamine N-acyltransferase (348 aa).

Residue His-241 is the Proton acceptor of the active site.

Belongs to the transferase hexapeptide repeat family. LpxD subfamily. As to quaternary structure, homotrimer.

The enzyme catalyses a UDP-3-O-[(3R)-3-hydroxyacyl]-alpha-D-glucosamine + a (3R)-hydroxyacyl-[ACP] = a UDP-2-N,3-O-bis[(3R)-3-hydroxyacyl]-alpha-D-glucosamine + holo-[ACP] + H(+). The protein operates within bacterial outer membrane biogenesis; LPS lipid A biosynthesis. Catalyzes the N-acylation of UDP-3-O-acylglucosamine using 3-hydroxyacyl-ACP as the acyl donor. Is involved in the biosynthesis of lipid A, a phosphorylated glycolipid that anchors the lipopolysaccharide to the outer membrane of the cell. This chain is UDP-3-O-acylglucosamine N-acyltransferase, found in Neisseria meningitidis serogroup C / serotype 2a (strain ATCC 700532 / DSM 15464 / FAM18).